A 66-amino-acid chain; its full sequence is Muscarinic toxin 1 (66 aa).

Cystine bridges form between C3/C24, C17/C42, C46/C58, and C59/C64.

It belongs to the three-finger toxin family. Short-chain subfamily. Aminergic toxin sub-subfamily. In terms of tissue distribution, expressed by the venom gland.

The protein resides in the secreted. Shows a non-competitive interaction with adrenergic and muscarinic receptors. Binds to alpha-2b (ADRA2B) (IC(50)=2.3 nM), alpha-1a (ADRA1A), alpha-1b (ADRA1B), and alpha-2c (ADRA2C) adrenergic receptors. Reversibly binds to M1 (CHRM1) muscarinic acetylcholine receptors, probably by interacting with the orthosteric site. Also reveals a slightly weaker effect at M3 (CHRM3) and M4 (CHRM4) receptors. The order of potency is ADRA2B&gt;&gt;CHRM1&gt;ADRA1A&gt;ADRA1B&gt;ADRA2C/CHRM4. In Dendroaspis angusticeps (Eastern green mamba), this protein is Muscarinic toxin 1.